A 123-amino-acid polypeptide reads, in one-letter code: Proteasome assembly chaperone 4 (123 aa).

The protein belongs to the PSMG4 family. In terms of assembly, interacts with PSMG3. Associates with alpha subunits of the 20S proteasome.

Its function is as follows. Chaperone protein which promotes assembly of the 20S proteasome. This is Proteasome assembly chaperone 4 from Homo sapiens (Human).